Here is a 463-residue protein sequence, read N- to C-terminus: Topoisomerase I damage affected protein 11 (463 aa).

Residues 1–110 (MNGSTSSDAV…TIPDSPIPTA (110 aa)) are disordered. 2 stretches are compositionally biased toward polar residues: residues 17-32 (TTPS…GSDT) and 40-55 (ITPS…SKGI). Positions 96 to 110 (SSPSSTIPDSPIPTA) are enriched in low complexity. Residues 145–177 (IVEIKDSIGNLTSKLQRNENELHSLREVIQRSL) adopt a coiled-coil conformation. Disordered regions lie at residues 180–255 (ELNS…DSTL), 281–358 (MIPQ…TESH), and 388–413 (ADED…NDQK). Residues 225–238 (LSSSSSGVPPVLSS) show a composition bias toward low complexity. Residues 288-304 (EGSDKTMDSHKSRHSED) are compositionally biased toward basic and acidic residues. The segment covering 305–322 (STSSLGSISSPLNSKSKS) has biased composition (low complexity).

Belongs to the TDA11 family.

The protein localises to the cytoplasm. This is Topoisomerase I damage affected protein 11 (TDA11) from Debaryomyces hansenii (strain ATCC 36239 / CBS 767 / BCRC 21394 / JCM 1990 / NBRC 0083 / IGC 2968) (Yeast).